A 474-amino-acid polypeptide reads, in one-letter code: MKLNDTIVALATPSGAGAIAIIRVSGPDALEIVAPLFKAKSKKDLAKQPTHTLHLGNVMDGERTIDEVLASVFRAPKSYTGEETVELSCHGSPYIQQEIIQLLIRKSCRSAEAGEFTLRAFLNAKMDLSQAEAVADLINSENAASHQMAMQQMRGGFSNEIQKLREELLNFASLIELELDFAEEDVEFANRDQFKDLVSKIQTVLKRLLDSFATGNVLKNGIPVAIVGEPNVGKSTLLNALLNEERAIVSEIAGTTRDTIEDEMSIGGVGFRFIDTAGIRETKDVVESIGIKKTFEKISQAQVVVYLVDSSQIAVNRERLQQVRIEIEKIKNKFPQKPLLIIANKTDRLADEEIHNLKTKLEEISSHAERAQFLLLSAKTNLGVEELKEKLLEYVNTGALRNSDTIVTNSRHYAALLKALEEINKVEEGLNADLSGDLLAIDIRQALHHFGEITGEITNDDLLGNIFANFCIGK.

Residues arginine 23, glutamate 86, and lysine 125 each coordinate (6S)-5-formyl-5,6,7,8-tetrahydrofolate. A TrmE-type G domain is found at glycine 221–asparagine 396. Asparagine 231 serves as a coordination point for K(+). GTP-binding positions include asparagine 231–threonine 236, serine 250–threonine 256, and aspartate 275–glycine 278. Position 235 (serine 235) interacts with Mg(2+). K(+) contacts are provided by serine 250, isoleucine 252, and threonine 255. Threonine 256 is a binding site for Mg(2+). Lysine 474 is a (6S)-5-formyl-5,6,7,8-tetrahydrofolate binding site.

The protein belongs to the TRAFAC class TrmE-Era-EngA-EngB-Septin-like GTPase superfamily. TrmE GTPase family. In terms of assembly, homodimer. Heterotetramer of two MnmE and two MnmG subunits. K(+) is required as a cofactor.

The protein resides in the cytoplasm. Exhibits a very high intrinsic GTPase hydrolysis rate. Involved in the addition of a carboxymethylaminomethyl (cmnm) group at the wobble position (U34) of certain tRNAs, forming tRNA-cmnm(5)s(2)U34. In Christiangramia forsetii (strain DSM 17595 / CGMCC 1.15422 / KT0803) (Gramella forsetii), this protein is tRNA modification GTPase MnmE.